A 1172-amino-acid polypeptide reads, in one-letter code: MGLHLTVPGLRRDGRGVQSNSHDTSSKTTADISRCPQHTDAGLQRAATPGISRLLGISSRSVTLTKPRSATRGNSRYHWVPAAAGWTVGVIATLSLLASVSPLIRWIIKVPREFINDYLFNFPDTNFAWSFVLALLAAALTARKRIAWLVLLANMVLAAVVNAAEIAAGGNTAAESFGENLGFAVHVVAIVVLVLGYREFWAKVRRGALFRAAAVWLAGAVVGIVASWGLVELFPGSLAPDERLGYAANRVVGFALADPDLFTGRPHVFLNAIFGLFGAFALIGAAIVLFLSQRADNALTGEDESAIRGLLDLYGKDDSLGYFATRRDKSVVFASSGRACITYRVEVGVCLASGDPVGDHRAWPQAVDAWLRLCQTYGWAPGVMGASSQGAQTYREAGLTALELGDEAILRPADFKLSGPEMRGVRQAVTRARRAGLTVRIRRHRDIAEDEMAQTITRADSWRDTETERGFSMALGRLGDPADSDCLLVEAIDPHNQVLAMLSLVPWGTTGVSLDLMRRSPQSPNGTIELMVSELALHAESLGITRISLNFAVFRAAFEQGAQLGAGPVARLWRGLLVFFSRWWQLETLYRSNMKYQPEWVPRYACYEDARVIPRVGVASVIAEGFLVLPFSRRNRVHTGHHPAVPERLAATGLLHHDGSAPDVSGLRQVGLTNGDGVERRLPEQVRVRFDKLEKLRSSGIDAFPVGRPPSHTVAQALAADHQASVSVSGRIMRIRNYGGVLFAQLRDWSGEMQVLLDNSRLDQGCAAEFNAATDLGDLVEMTGHMGASKTGTPSLIVSGWRLIGKCLRPLPNKWKGLLDPEARVRTRYLDLAVNAESRALITARSSVLRAVRETLFAKGFVEVETPILQQLHGGATARPFVTHINTYSMDLFLRIAPELYLKRLCVGGVERVFELGRAFRNEGVDFSHNPEFTLLEAYQAHAGYLEWIDGCRELIQNAAQAANGAPIAMRPRTDKGSDGTRHHLEPVDISGIWPVRTVHDAISEALGERIDADTGLTTLRKLCDAAGVPYRTQWDAGAVVLELYEHLVECRTEQPTFYIDFPTSVSPLTRPHRSKRGVAERWDLVAWGIELGTAYSELTDPVEQRRRLQEQSLLAAGGDPEAMELDEDFLQAMEYAMPPTGGLGMGIDRVVMLITGRSIRETLPFPLAKPH.

The disordered stretch occupies residues 1-34; it reads MGLHLTVPGLRRDGRGVQSNSHDTSSKTTADISR. The tract at residues 1 to 663 is phosphatidylglycerol lysyltransferase; it reads MGLHLTVPGL…LLHHDGSAPD (663 aa). Positions 17–31 are enriched in polar residues; that stretch reads VQSNSHDTSSKTTAD. Transmembrane regions (helical) follow at residues 80–100, 122–142, 146–166, 177–197, 214–234, 272–292, and 612–632; these read VPAA…LASV, FPDT…ALTA, IAWL…AAEI, FGEN…VLGY, AVWL…VELF, AIFG…LFLS, and VIPR…LPFS. Residues 664–1172 are lysine--tRNA ligase; sequence VSGLRQVGLT…TLPFPLAKPH (509 aa). Positions 726–804 form a DNA-binding region, OB; the sequence is VSVSGRIMRI…SLIVSGWRLI (79 aa). Positions 1084 and 1091 each coordinate Mg(2+).

The protein in the N-terminal section; belongs to the LPG synthetase family. It in the C-terminal section; belongs to the class-II aminoacyl-tRNA synthetase family. Mg(2+) serves as cofactor.

The protein localises to the cell membrane. It carries out the reaction tRNA(Lys) + L-lysine + ATP = L-lysyl-tRNA(Lys) + AMP + diphosphate. It catalyses the reaction L-lysyl-tRNA(Lys) + a 1,2-diacyl-sn-glycero-3-phospho-(1'-sn-glycerol) = a 1,2-diacyl-sn-glycero-3-phospho-1'-(3'-O-L-lysyl)-sn-glycerol + tRNA(Lys). Its function is as follows. Catalyzes the production of L-lysyl-tRNA(Lys)transfer and the transfer of a lysyl group from L-lysyl-tRNA(Lys) to membrane-bound phosphatidylglycerol (PG), which produces lysylphosphatidylglycerol (LPG), one of the components of the bacterial membrane with a positive net charge. LPG synthesis contributes to the resistance to cationic antimicrobial peptides (CAMPs) and likely protects M.tuberculosis against the CAMPs produced by competiting microorganisms (bacteriocins). In fact, the modification of anionic phosphatidylglycerol with positively charged L-lysine results in repulsion of the peptides. In Mycobacterium bovis (strain BCG / Pasteur 1173P2), this protein is Lysylphosphatidylglycerol biosynthesis bifunctional protein LysX (lysX).